Here is a 450-residue protein sequence, read N- to C-terminus: MGKYFGTDGVRGEANVELTPELAFKLGRFGGYVLSQHETGRPKVFVARDTRISGEMLESALVAGLLSVGIEVYKLGVLATPGVSYLVRTENASAGVMISASHNPALDNGIKFFGGDGFKLDDAREAEIEALLDAAEDTLPRPSAEGLGTLVDYPEGLRKYEKFLVTTGLDLGGMKVALDAANGAAAVSARNIFLDLNAEIAVIGDQPDGLNINAGVGSTHPEQLQALVRESGSAIGLAFDGDSDRLIAVDENGDIVDGDKVMYIIGKYLSQKGELAKNTIVTTVMSNLGFHKALDREGINKAVTAVGDRYVVEEMRKNGYNLGGEQSGHVIIMDYNTTGDGQLTAIQLTKVMVETGKSLSELAAEVTIYPQKLVNIRVENSMKDKAMDVPAIAAIIEKMEAEMAGNGRILVRPSGTEPLLRVMAEAPTDDEVNYYVDTIADVVRAEIGLD.

Catalysis depends on Ser101, which acts as the Phosphoserine intermediate. Mg(2+) contacts are provided by Ser101, Asp240, Asp242, and Asp244. Ser101 carries the phosphoserine modification.

This sequence belongs to the phosphohexose mutase family. Mg(2+) serves as cofactor. Post-translationally, activated by phosphorylation.

The enzyme catalyses alpha-D-glucosamine 1-phosphate = D-glucosamine 6-phosphate. Catalyzes the conversion of glucosamine-6-phosphate to glucosamine-1-phosphate. The polypeptide is Phosphoglucosamine mutase (Streptococcus thermophilus (strain ATCC BAA-250 / LMG 18311)).